Consider the following 101-residue polypeptide: Small ribosomal subunit protein uS14 (101 aa).

Belongs to the universal ribosomal protein uS14 family. In terms of assembly, part of the 30S ribosomal subunit. Contacts proteins S3 and S10.

Binds 16S rRNA, required for the assembly of 30S particles and may also be responsible for determining the conformation of the 16S rRNA at the A site. This Francisella tularensis subsp. tularensis (strain FSC 198) protein is Small ribosomal subunit protein uS14.